Here is a 260-residue protein sequence, read N- to C-terminus: 14-3-3-like protein GF14-F (260 aa).

The disordered stretch occupies residues 241 to 260 (NAEDGGDEIKEAAKPEGEGH). Basic and acidic residues predominate over residues 247–260 (DEIKEAAKPEGEGH).

The protein belongs to the 14-3-3 family. As to quaternary structure, may form a complex with the transcriptional activator VP1 and the bZIP transcription factor EMBP1. In terms of tissue distribution, expressed in seedlings, roots and panicles and at lower levels in flag leaves and internodes.

The protein resides in the cytoplasm. Its subcellular location is the nucleus. Functionally, is associated with a DNA binding complex that binds to the G box, a well-characterized cis-acting DNA regulatory element found in plant genes. This is 14-3-3-like protein GF14-F (GF14F) from Oryza sativa subsp. japonica (Rice).